The chain runs to 355 residues: UDP-N-acetylglucosamine--N-acetylmuramyl-(pentapeptide) pyrophosphoryl-undecaprenol N-acetylglucosamine transferase (355 aa).

Residues 15 to 17, asparagine 127, arginine 163, serine 191, isoleucine 245, 264 to 269, and glutamine 289 each bind UDP-N-acetyl-alpha-D-glucosamine; these read TGG and ALTVSE.

It belongs to the glycosyltransferase 28 family. MurG subfamily.

Its subcellular location is the cell inner membrane. It carries out the reaction di-trans,octa-cis-undecaprenyl diphospho-N-acetyl-alpha-D-muramoyl-L-alanyl-D-glutamyl-meso-2,6-diaminopimeloyl-D-alanyl-D-alanine + UDP-N-acetyl-alpha-D-glucosamine = di-trans,octa-cis-undecaprenyl diphospho-[N-acetyl-alpha-D-glucosaminyl-(1-&gt;4)]-N-acetyl-alpha-D-muramoyl-L-alanyl-D-glutamyl-meso-2,6-diaminopimeloyl-D-alanyl-D-alanine + UDP + H(+). It participates in cell wall biogenesis; peptidoglycan biosynthesis. Its function is as follows. Cell wall formation. Catalyzes the transfer of a GlcNAc subunit on undecaprenyl-pyrophosphoryl-MurNAc-pentapeptide (lipid intermediate I) to form undecaprenyl-pyrophosphoryl-MurNAc-(pentapeptide)GlcNAc (lipid intermediate II). The chain is UDP-N-acetylglucosamine--N-acetylmuramyl-(pentapeptide) pyrophosphoryl-undecaprenol N-acetylglucosamine transferase from Yersinia enterocolitica serotype O:8 / biotype 1B (strain NCTC 13174 / 8081).